Reading from the N-terminus, the 399-residue chain is 4-hydroxyphenylpyruvate dioxygenase (399 aa).

VOC domains lie at 23-166 (GYDH…LIER) and 197-355 (RIDH…LFTK). 3 residues coordinate Fe cation: histidine 200, histidine 283, and glutamate 366.

The protein belongs to the 4HPPD family. The cofactor is Fe cation.

It carries out the reaction 3-(4-hydroxyphenyl)pyruvate + O2 = homogentisate + CO2. The protein operates within amino-acid degradation; L-phenylalanine degradation; acetoacetate and fumarate from L-phenylalanine: step 3/6. In Coccidioides posadasii (strain C735) (Valley fever fungus), this protein is 4-hydroxyphenylpyruvate dioxygenase (TCRP).